The sequence spans 416 residues: MAYLFTSESVSEGHPDKVADQISDALIDNFLAFDAQSKVACETLVTTGQVILAGEVKSNTYLDVQNIAREVIRKIGYTKSEYMFEANSCGILSAIHEQSADINQGVDRASKEEQGAGDQGMMFGYATNETENYMPLALDLSHALLIELANLRRENNDIKYLRPDAKSQVTLEYSDDNKPQRIDAIVISTQHDDFDEEATMLAKIKTDLVSILIPRIKAKYPQYAHLFNDQITYHINPTGKFVIGGPHGDTGLTGRKIIVDTYGGKGAHGGGAFSGKDPSKVDRSAAYATRHIAKNLVAAGICDEILVQVSYAIGVAKPTSINVVTYGTSKVNLTDGEISKKVEAIFDMRPYFIEQRLKLRNPIYSETAAYGHMGRTPETVTKTFSAPGGLTKTVEVELFTWEKLDFVDTVKTAFGI.

Histidine 14 contributes to the ATP binding site. A Mg(2+)-binding site is contributed by aspartate 16. Glutamate 42 serves as a coordination point for K(+). Glutamate 55 and glutamine 98 together coordinate L-methionine. A flexible loop region spans residues 98 to 108 (QSADINQGVDR). Residues 164-166 (DAK), 240-241 (KF), aspartate 249, 255-256 (RK), alanine 272, and lysine 276 each bind ATP. Aspartate 249 serves as a coordination point for L-methionine. Lysine 280 is an L-methionine binding site.

It belongs to the AdoMet synthase family. Homotetramer; dimer of dimers. Mg(2+) is required as a cofactor. The cofactor is K(+).

It is found in the cytoplasm. The catalysed reaction is L-methionine + ATP + H2O = S-adenosyl-L-methionine + phosphate + diphosphate. Its pathway is amino-acid biosynthesis; S-adenosyl-L-methionine biosynthesis; S-adenosyl-L-methionine from L-methionine: step 1/1. In terms of biological role, catalyzes the formation of S-adenosylmethionine (AdoMet) from methionine and ATP. The overall synthetic reaction is composed of two sequential steps, AdoMet formation and the subsequent tripolyphosphate hydrolysis which occurs prior to release of AdoMet from the enzyme. This chain is S-adenosylmethionine synthase, found in Flavobacterium psychrophilum (strain ATCC 49511 / DSM 21280 / CIP 103535 / JIP02/86).